The sequence spans 135 residues: Galectin-1 (135 aa).

At alanine 2 the chain carries N-acetylalanine. Residues 4–135 (GLVASNLNLK…DFKIKCVAFD (132 aa)) form the Galectin domain. Lysine 13 and lysine 29 each carry N6-acetyllysine. Serine 30 is modified (phosphoserine). A beta-D-galactoside is bound by residues 45–49 (HFNPR), histidine 53, asparagine 62, and 69–72 (WGTE). N6-acetyllysine; alternate is present on lysine 108. An N6-succinyllysine; alternate modification is found at lysine 108. Lysine 128 bears the N6-acetyllysine mark.

In terms of assembly, homodimer. Binds LGALS3BP. Interacts with CD2, CD3, CD4, CD6, CD7, CD43, ALCAM and CD45. Interacts with laminin (via poly-N-acetyllactosamine). Interacts with SUSD2.

The protein localises to the secreted. It localises to the extracellular space. Its subcellular location is the extracellular matrix. Functionally, lectin that binds beta-galactoside and a wide array of complex carbohydrates. Plays a role in regulating apoptosis, cell proliferation and cell differentiation. Inhibits CD45 protein phosphatase activity and therefore the dephosphorylation of Lyn kinase. Strong inducer of T-cell apoptosis. This Pongo abelii (Sumatran orangutan) protein is Galectin-1 (LGALS1).